Consider the following 251-residue polypeptide: HTH-type transcriptional regulator UlaR (251 aa).

The 56-residue stretch at 3 to 58 (EAQRHQILLDMLAQLGFVTVENVIERLGISPATARRDINKLDESGKLKKVRNGAEA) folds into the HTH deoR-type domain. Residues 20–39 (VTVENVIERLGISPATARRD) constitute a DNA-binding region (H-T-H motif).

Its subcellular location is the cytoplasm. In terms of biological role, represses ulaG and the ulaABCDEF operon. The sequence is that of HTH-type transcriptional regulator UlaR from Salmonella arizonae (strain ATCC BAA-731 / CDC346-86 / RSK2980).